The chain runs to 404 residues: CCA-adding enzyme (404 aa).

Positions 27 and 30 each coordinate ATP. Positions 27 and 30 each coordinate CTP. Mg(2+) is bound by residues D40 and D42. Residues R111, D154, R157, R160, and R163 each coordinate ATP. Residues R111, D154, R157, R160, and R163 each coordinate CTP.

This sequence belongs to the tRNA nucleotidyltransferase/poly(A) polymerase family. Bacterial CCA-adding enzyme type 3 subfamily. Homodimer. The cofactor is Mg(2+).

The catalysed reaction is a tRNA precursor + 2 CTP + ATP = a tRNA with a 3' CCA end + 3 diphosphate. It carries out the reaction a tRNA with a 3' CCA end + 2 CTP + ATP = a tRNA with a 3' CCACCA end + 3 diphosphate. Functionally, catalyzes the addition and repair of the essential 3'-terminal CCA sequence in tRNAs without using a nucleic acid template. Adds these three nucleotides in the order of C, C, and A to the tRNA nucleotide-73, using CTP and ATP as substrates and producing inorganic pyrophosphate. tRNA 3'-terminal CCA addition is required both for tRNA processing and repair. Also involved in tRNA surveillance by mediating tandem CCA addition to generate a CCACCA at the 3' terminus of unstable tRNAs. While stable tRNAs receive only 3'-terminal CCA, unstable tRNAs are marked with CCACCA and rapidly degraded. The structural flexibility of RNA controls the choice between CCA versus CCACCA addition: following the first CCA addition cycle, nucleotide-binding to the active site triggers a clockwise screw motion, producing torque on the RNA. This ejects stable RNAs, whereas unstable RNAs are refolded while bound to the enzyme and subjected to a second CCA catalytic cycle. This chain is CCA-adding enzyme, found in Geobacillus stearothermophilus (Bacillus stearothermophilus).